We begin with the raw amino-acid sequence, 491 residues long: Monocarboxylate transport permease protein (491 aa).

13 helical membrane-spanning segments follow: residues 7–27 (GTAL…GFVA), 55–75 (WFLV…PALV), 83–103 (FFAL…MPVL), 130–150 (LAVA…QLVG), 157–177 (ALGL…ALYT), 187–207 (LIAF…VALI), 246–266 (LALG…GIFA), 277–297 (AIML…GYMG), 322–342 (WFSG…AAVM), 374–396 (ITSL…QFAL), 400–422 (LLGG…TNWF), 427–447 (LLAG…DAGW), and 465–485 (GLLA…LLPA).

The protein belongs to the sodium:solute symporter (SSF) (TC 2.A.21) family.

The protein localises to the cell membrane. Its activity is regulated as follows. Inhibited by CCCP, but is apparently not affected by the concentration of sodium. In terms of biological role, low-affinity transporter of alanine and high-affinity transporter of lactate and pyruvate. Can also transport other monocarboxylates such as propionate, butyrate, alpha-hydroxybutyrate or acetate. May be proton coupled. Required for optimal growth on alanine or pyruvate and ammonia. The sequence is that of Monocarboxylate transport permease protein from Rhizobium johnstonii (strain DSM 114642 / LMG 32736 / 3841) (Rhizobium leguminosarum bv. viciae).